The sequence spans 174 residues: Large ribosomal subunit protein bL12cy (174 aa).

A chloroplast-targeting transit peptide spans 1 to 45 (MASTTFSSAFSILSLPSSSPSPPPWAPRTLPVANRRRRAAAVAST).

It belongs to the bacterial ribosomal protein bL12 family.

The protein resides in the plastid. Its subcellular location is the chloroplast. In Secale cereale (Rye), this protein is Large ribosomal subunit protein bL12cy (RPL12-2).